The sequence spans 502 residues: Glycerol kinase (502 aa).

An ADP-binding site is contributed by T13. Residues T13, T14, and S15 each coordinate ATP. T13 lines the sn-glycerol 3-phosphate pocket. An ADP-binding site is contributed by R17. Residues R83, E84, Y136, and D246 each contribute to the sn-glycerol 3-phosphate site. Positions 83, 84, 136, 246, and 247 each coordinate glycerol. Positions 268 and 311 each coordinate ADP. Residues T268, G311, Q315, and G412 each coordinate ATP. The ADP site is built by G412 and N416.

This sequence belongs to the FGGY kinase family.

It catalyses the reaction glycerol + ATP = sn-glycerol 3-phosphate + ADP + H(+). It functions in the pathway polyol metabolism; glycerol degradation via glycerol kinase pathway; sn-glycerol 3-phosphate from glycerol: step 1/1. Inhibited by fructose 1,6-bisphosphate (FBP). Its function is as follows. Key enzyme in the regulation of glycerol uptake and metabolism. Catalyzes the phosphorylation of glycerol to yield sn-glycerol 3-phosphate. This is Glycerol kinase from Francisella tularensis subsp. holarctica (strain FTNF002-00 / FTA).